A 705-amino-acid chain; its full sequence is Ribosomal RNA large subunit methyltransferase K/L (705 aa).

A THUMP domain is found at 43–154; the sequence is VVYRCCLWSR…GEKGILGFDL (112 aa).

Belongs to the methyltransferase superfamily. RlmKL family.

It is found in the cytoplasm. It carries out the reaction guanosine(2445) in 23S rRNA + S-adenosyl-L-methionine = N(2)-methylguanosine(2445) in 23S rRNA + S-adenosyl-L-homocysteine + H(+). The catalysed reaction is guanosine(2069) in 23S rRNA + S-adenosyl-L-methionine = N(2)-methylguanosine(2069) in 23S rRNA + S-adenosyl-L-homocysteine + H(+). In terms of biological role, specifically methylates the guanine in position 2445 (m2G2445) and the guanine in position 2069 (m7G2069) of 23S rRNA. The chain is Ribosomal RNA large subunit methyltransferase K/L from Aliivibrio fischeri (strain MJ11) (Vibrio fischeri).